The chain runs to 561 residues: Oxygen-dependent choline dehydrogenase (561 aa).

Position 6 to 35 (6 to 35 (DYIIIGAGSAGNVLATRLTEDADVSVLLLE)) interacts with FAD. The active-site Proton acceptor is His475.

This sequence belongs to the GMC oxidoreductase family. FAD serves as cofactor.

It catalyses the reaction choline + A = betaine aldehyde + AH2. The catalysed reaction is betaine aldehyde + NAD(+) + H2O = glycine betaine + NADH + 2 H(+). The protein operates within amine and polyamine biosynthesis; betaine biosynthesis via choline pathway; betaine aldehyde from choline (cytochrome c reductase route): step 1/1. In terms of biological role, involved in the biosynthesis of the osmoprotectant glycine betaine. Catalyzes the oxidation of choline to betaine aldehyde and betaine aldehyde to glycine betaine at the same rate. The polypeptide is Oxygen-dependent choline dehydrogenase (Pseudomonas aeruginosa (strain UCBPP-PA14)).